An 802-amino-acid chain; its full sequence is Lon protease (802 aa).

Residues 17-209 (LPILPLNNVV…QVLSFLERER (193 aa)) enclose the Lon N-terminal domain. An ATP-binding site is contributed by 363 to 370 (GPPGVGKT). One can recognise a Lon proteolytic domain in the interval 599 to 780 (EDEVGVVTGL…DEVLPRVLHP (182 aa)). Residues Ser-686 and Lys-729 contribute to the active site.

Belongs to the peptidase S16 family. As to quaternary structure, homohexamer. Organized in a ring with a central cavity.

It localises to the cytoplasm. It carries out the reaction Hydrolysis of proteins in presence of ATP.. Its function is as follows. ATP-dependent serine protease that mediates the selective degradation of mutant and abnormal proteins as well as certain short-lived regulatory proteins. Required for cellular homeostasis and for survival from DNA damage and developmental changes induced by stress. Degrades polypeptides processively to yield small peptide fragments that are 5 to 10 amino acids long. Binds to DNA in a double-stranded, site-specific manner. This is Lon protease from Roseiflexus castenholzii (strain DSM 13941 / HLO8).